The primary structure comprises 940 residues: Testis-expressed protein 11 (940 aa).

Belongs to the SPO22 family. In terms of assembly, interacts with SYCP2. Interacts with PBXIP1; may prevent interaction between PBXIP1 and ESR2. Interacts with SHOC1. Interacts with REDIC1. In terms of tissue distribution, testis-specific. Not expressed in adult ovaries.

Its subcellular location is the chromosome. Its function is as follows. Regulator of crossing-over during meiosis. Involved in initiation and/or maintenance of chromosome synapsis and formation of crossovers. In Homo sapiens (Human), this protein is Testis-expressed protein 11 (TEX11).